We begin with the raw amino-acid sequence, 328 residues long: MNPLTKVKLINELNEREVQLGVAEKVSWHSEYKDSAWIFLGGLPYELTEGDIICVFSQYGEIVNINLVRDKKTGKSKGFCFLCYEDQRSTVLAVDNFNGIKIKGRTIRVDHVANYRAPQESEDVDDVTRELQEKGCGAKTPPSSPPEVSEDEDAKVTKKPKKDKKEKKKKKEKEKTERPVQAELPSCSRSKTVKETDEQSAKKHSSKPSERAQKSECRERKKSHSGSPDGRTSCRGRAEEPEWEAKKEKHKHEHKPSSRREGEEKSRDKDRGRSSGTHSSRHHGHSEGRSHRSRSRSRSRSPDRSHRHKKHRYSHERESFHASDRRHY.

Lys8 participates in a covalent cross-link: Glycyl lysine isopeptide (Lys-Gly) (interchain with G-Cter in SUMO2). Residues 36-114 (AWIFLGGLPY…RTIRVDHVAN (79 aa)) form the RRM domain. The segment at 118-328 (PQESEDVDDV…SFHASDRRHY (211 aa)) is disordered. Thr140 carries the post-translational modification Phosphothreonine. The residue at position 149 (Ser149) is a Phosphoserine. Residues 157–172 (TKKPKKDKKEKKKKKE) are compositionally biased toward basic residues. Composition is skewed to basic and acidic residues over residues 192–219 (TVKE…ECRE), 236–247 (GRAEEPEWEAKK), and 255–273 (KPSS…DRGR). A Glycyl lysine isopeptide (Lys-Gly) (interchain with G-Cter in SUMO2) cross-link involves residue Lys246. Phosphoserine is present on Ser274. Residues 291–314 (HRSRSRSRSRSPDRSHRHKKHRYS) show a composition bias toward basic residues. Residues 315–328 (HERESFHASDRRHY) are compositionally biased toward basic and acidic residues.

Belongs to the IST3 family. Part of the activated spliceosome B/catalytic step 1 spliceosome, one of the forms of the spliceosome which has a well-formed active site but still cannot catalyze the branching reaction and is composed of at least 52 proteins, the U2, U5 and U6 snRNAs and the pre-mRNA. Component of the minor spliceosome, which splices U12-type introns.

Its subcellular location is the nucleus. In terms of biological role, involved in pre-mRNA splicing as component of the activated spliceosome. As a component of the minor spliceosome, involved in the splicing of U12-type introns in pre-mRNAs. The protein is RNA-binding motif protein, X-linked 2 (Rbmx2) of Rattus norvegicus (Rat).